A 33-amino-acid polypeptide reads, in one-letter code: Photosystem II reaction center protein Psb30 (33 aa).

Residues 5–25 (LIGQLVTVALVVGAGPIIIGA) traverse the membrane as a helical segment.

It belongs to the Psb30/Ycf12 family. PSII is composed of 1 copy each of membrane proteins PsbA, PsbB, PsbC, PsbD, PsbE, PsbF, PsbH, PsbI, PsbJ, PsbK, PsbL, PsbM, PsbT, PsbX, PsbY, PsbZ, Psb30/Ycf12, peripheral proteins of the oxygen-evolving complex and a large number of cofactors. It forms dimeric complexes.

Its subcellular location is the plastid. The protein resides in the chloroplast thylakoid membrane. Its function is as follows. A core subunit of photosystem II (PSII), probably helps stabilize the reaction center. This Ostreococcus tauri protein is Photosystem II reaction center protein Psb30.